The sequence spans 754 residues: Ubiquitin carboxyl-terminal hydrolase 9 (754 aa).

Residues 1–14 show a composition bias toward basic residues; it reads MIKRWLSVNRKKSH. The disordered stretch occupies residues 1 to 76; sequence MIKRWLSVNR…SKFSSQTDNL (76 aa). Low complexity predominate over residues 42 to 58; sequence SIAKSPSAKSSTSSIPS. Residues 134-667 form the USP domain; that stretch reads FGYENFGNTC…TAYVLFYKET (534 aa). The Nucleophile role is filled by C143. Residues 194–209 are compositionally biased toward polar residues; sequence ETSTNSGNSNTGYQSN. Residues 194–273 are disordered; the sequence is ETSTNSGNSN…DNNEMERPQP (80 aa). Low complexity predominate over residues 222–233; that stretch reads QSDQDNSSSSTQ. Positions 250–272 are enriched in basic and acidic residues; the sequence is GKDKSNYKDSAKKDDNNEMERPQ. H618 functions as the Proton acceptor in the catalytic mechanism. Residues 726–754 are disordered; it reads VKTAETKTPLNDKKRNKQKRKSRILSFIK. Residues 727-738 show a composition bias toward basic and acidic residues; it reads KTAETKTPLNDK. Residues 739–748 show a composition bias toward basic residues; the sequence is KRNKQKRKSR.

Belongs to the peptidase C19 family.

It catalyses the reaction Thiol-dependent hydrolysis of ester, thioester, amide, peptide and isopeptide bonds formed by the C-terminal Gly of ubiquitin (a 76-residue protein attached to proteins as an intracellular targeting signal).. This Saccharomyces cerevisiae (strain ATCC 204508 / S288c) (Baker's yeast) protein is Ubiquitin carboxyl-terminal hydrolase 9 (UBP9).